A 297-amino-acid polypeptide reads, in one-letter code: Acetylglutamate kinase (297 aa).

Substrate contacts are provided by residues 72 to 73 (GG), R94, and N187.

Belongs to the acetylglutamate kinase family. ArgB subfamily.

The protein localises to the cytoplasm. The catalysed reaction is N-acetyl-L-glutamate + ATP = N-acetyl-L-glutamyl 5-phosphate + ADP. It functions in the pathway amino-acid biosynthesis; L-arginine biosynthesis; N(2)-acetyl-L-ornithine from L-glutamate: step 2/4. Catalyzes the ATP-dependent phosphorylation of N-acetyl-L-glutamate. The protein is Acetylglutamate kinase of Synechocystis sp. (strain ATCC 27184 / PCC 6803 / Kazusa).